Here is a 450-residue protein sequence, read N- to C-terminus: Deoxyguanosinetriphosphate triphosphohydrolase-like protein (450 aa).

The 141-residue stretch at 61–201 (RLTHSLEVAQ…AKLAPELNAD (141 aa)) folds into the HD domain.

Belongs to the dGTPase family. Type 2 subfamily.

The polypeptide is Deoxyguanosinetriphosphate triphosphohydrolase-like protein (Pasteurella multocida (strain Pm70)).